Reading from the N-terminus, the 303-residue chain is Aspartate carbamoyltransferase catalytic subunit (303 aa).

2 residues coordinate carbamoyl phosphate: R54 and T55. K83 is an L-aspartate binding site. Positions 104, 132, and 135 each coordinate carbamoyl phosphate. Residues R164 and R226 each coordinate L-aspartate. Carbamoyl phosphate is bound by residues L265 and P266.

It belongs to the aspartate/ornithine carbamoyltransferase superfamily. ATCase family. In terms of assembly, heterooligomer of catalytic and regulatory chains.

The enzyme catalyses carbamoyl phosphate + L-aspartate = N-carbamoyl-L-aspartate + phosphate + H(+). Its pathway is pyrimidine metabolism; UMP biosynthesis via de novo pathway; (S)-dihydroorotate from bicarbonate: step 2/3. Functionally, catalyzes the condensation of carbamoyl phosphate and aspartate to form carbamoyl aspartate and inorganic phosphate, the committed step in the de novo pyrimidine nucleotide biosynthesis pathway. The polypeptide is Aspartate carbamoyltransferase catalytic subunit (Methanocorpusculum labreanum (strain ATCC 43576 / DSM 4855 / Z)).